The chain runs to 516 residues: Acetylcholine receptor subunit alpha-like (516 aa).

The signal sequence occupies residues 1–21; sequence MRSVTKYYLHGVVLFATGCAG. Topologically, residues 22 to 243 are extracellular; the sequence is NPDAKRLYDD…ITMRRKTLFY (222 aa). Asparagine 45 and asparagine 132 each carry an N-linked (GlcNAc...) asparagine glycan. 2 disulfide bridges follow: cysteine 149-cysteine 163 and cysteine 222-cysteine 223. An N-linked (GlcNAc...) asparagine glycan is attached at asparagine 233. 3 helical membrane-spanning segments follow: residues 244 to 264, 274 to 294, and 306 to 326; these read TVNL…VFYL, LSIS…EIIP, and FVLF…VVLN. Residues 327 to 465 lie on the Cytoplasmic side of the membrane; that stretch reads VHFRSPQTHT…WKYVAMVLDR (139 aa). Residues 466–486 traverse the membrane as a helical segment; that stretch reads PFLWIFTLAVVVGSAGIILQA.

The protein belongs to the ligand-gated ion channel (TC 1.A.9) family. Acetylcholine receptor (TC 1.A.9.1) subfamily.

The protein localises to the postsynaptic cell membrane. It localises to the cell membrane. Functionally, after binding acetylcholine, the AChR responds by an extensive change in conformation that affects all subunits and leads to opening of an ion-conducting channel across the plasma membrane. The protein is Acetylcholine receptor subunit alpha-like (ARA1) of Manduca sexta (Tobacco hawkmoth).